Here is a 116-residue protein sequence, read N- to C-terminus: Iron-sulfur cluster insertion protein ErpA (116 aa).

Residues cysteine 44, cysteine 108, and cysteine 110 each coordinate iron-sulfur cluster.

This sequence belongs to the HesB/IscA family. In terms of assembly, homodimer. Iron-sulfur cluster is required as a cofactor.

Required for insertion of 4Fe-4S clusters for at least IspG. This Pseudomonas entomophila (strain L48) protein is Iron-sulfur cluster insertion protein ErpA.